Reading from the N-terminus, the 97-residue chain is Acylphosphatase-2 (97 aa).

Residue Ala2 is modified to N-acetylalanine. An Acylphosphatase-like domain is found at Ser7–Tyr97. Residues Arg22 and Asn40 contribute to the active site. At Ser91 the chain carries Phosphoserine.

The protein belongs to the acylphosphatase family.

It carries out the reaction an acyl phosphate + H2O = a carboxylate + phosphate + H(+). In terms of biological role, its physiological role is not yet clear. The sequence is that of Acylphosphatase-2 (Acyp2) from Rattus norvegicus (Rat).